We begin with the raw amino-acid sequence, 79 residues long: Small ribosomal subunit protein uS17 (79 aa).

Belongs to the universal ribosomal protein uS17 family. As to quaternary structure, part of the 30S ribosomal subunit.

One of the primary rRNA binding proteins, it binds specifically to the 5'-end of 16S ribosomal RNA. This is Small ribosomal subunit protein uS17 from Rhizobium rhizogenes (strain K84 / ATCC BAA-868) (Agrobacterium radiobacter).